A 317-amino-acid chain; its full sequence is tRNA dimethylallyltransferase (317 aa).

14–21 is an ATP binding site; the sequence is GPTASGKT. 16–21 lines the substrate pocket; the sequence is TASGKT. Interaction with substrate tRNA stretches follow at residues 39–42, 163–167, and 248–253; these read DSAL, QRIQR, and RCVGYR.

It belongs to the IPP transferase family. Monomer. Mg(2+) is required as a cofactor.

The enzyme catalyses adenosine(37) in tRNA + dimethylallyl diphosphate = N(6)-dimethylallyladenosine(37) in tRNA + diphosphate. Functionally, catalyzes the transfer of a dimethylallyl group onto the adenine at position 37 in tRNAs that read codons beginning with uridine, leading to the formation of N6-(dimethylallyl)adenosine (i(6)A). This Paraburkholderia phymatum (strain DSM 17167 / CIP 108236 / LMG 21445 / STM815) (Burkholderia phymatum) protein is tRNA dimethylallyltransferase.